The following is a 135-amino-acid chain: Large ribosomal subunit protein uL16 (135 aa).

This sequence belongs to the universal ribosomal protein uL16 family. As to quaternary structure, part of the 50S ribosomal subunit.

Binds 23S rRNA and is also seen to make contacts with the A and possibly P site tRNAs. This is Large ribosomal subunit protein uL16 from Coprothermobacter proteolyticus (strain ATCC 35245 / DSM 5265 / OCM 4 / BT).